We begin with the raw amino-acid sequence, 867 residues long: MSSGAPLNVTNPNYDIEESRFGKIVCYDQSLLFEKREQKGWESGSTLASSLPFFITQLFVANLSYRVLYYLTRPLYLPPFVAQILCGLLFSPSVLGNTRFIIAHVFPYRFTMVLETFANLALVYNIFLLGLGMDLRMVRITELKPVIIAFTGLLVALPVGAFLYYLPGNGHPDKIISGCVFWSVALACTNFPDLARILADLKLLRSDMGRTAMCAAIVTDLCTWVLLVFGFASFSKSGTWNKMMPFVIITTAIFVLLCIFVIRPGIAWIFAKTVKAGHVGDTHVWFILGGVVLCGLITDACGVHSITGAFLFGLSIPHDHIIRNMIEEKLHDFLSGILMPLFYIICGLRADIGFMLQFTDKFMMVVVICSSFLVKIVTTVITSLFMHIPMRDAFAIGALMNTKGTLSLVVLNAGRDTKALDSPMYTHMTIALLVMSLVVEPLLAFAYKPKKKLAHYKHRTVQKIKGETELRVLACVHVLPNVSGITNLLQVSNATKQSPLSVFAIHLVELTGRTTASLLIMNDECKPKANFSDRVRAESDQIAETFEAMEVNNDAMTVQTITAVSPYATMHEDICVLAEDKRVCFIILPYHKHLTPDGRMGEGNSSHAEINQNVLSHAPCSVGILVDRGMAMVRSESFRGESMKREVAMLFVGGPDDREALSYAWRMVGQHVIKLTVVRFVPGREALISSGKVAAEYEREKQVDDECIYEFNFKTMNDSSVKYIEKVVNDGQDTIATIREMEDNNSYDLYVVGRGYNSDSPVTAGLNDWSSSPELGTIGDTLASSNFTMHASVLVIQQYSATKRQAAVTAAAATTVMGAVAGVTGNNLESAGGDAKMTRDAHEPFMKSMYEDEDEDDEEDHQYGIHR.

The next 12 membrane-spanning stretches (helical) occupy residues 43-63, 75-95, 112-132, 146-166, 175-195, 212-232, 242-262, 283-303, 336-356, 362-382, 393-413, and 427-447; these read SGSTLASSLPFFITQLFVANL, LYLPPFVAQILCGLLFSPSVL, MVLETFANLALVYNIFLLGLG, VIIAFTGLLVALPVGAFLYYL, IISGCVFWSVALACTNFPDLA, AMCAAIVTDLCTWVLLVFGFA, KMMPFVIITTAIFVLLCIFVI, HVWFILGGVVLCGLITDACGV, GILMPLFYIICGLRADIGFML, FMMVVVICSSFLVKIVTTVIT, AFAIGALMNTKGTLSLVVLNA, and HMTIALLVMSLVVEPLLAFAY. The disordered stretch occupies residues 848–867; the sequence is SMYEDEDEDDEEDHQYGIHR. Over residues 851 to 860 the composition is skewed to acidic residues; sequence EDEDEDDEED.

It belongs to the monovalent cation:proton antiporter 2 (CPA2) transporter (TC 2.A.37) family. CHX (TC 2.A.37.4) subfamily. In terms of tissue distribution, specifically expressed in flower buds and pollen. Expressed in leaves, roots and stems.

It is found in the plastid. The protein resides in the chloroplast membrane. It localises to the endoplasmic reticulum membrane. Functionally, operates as a K(+)/H(+) antiporter or Na(+)/H(+) antiporter of the chloroplast envelope that functions in pH homeostasis and chloroplast development. Monovalent cation transporter with a preference for Cs(+), K(+) and Rb(+) relative to Na(+) or Li(+). Required for pollen tube guidance, but not for normal pollen development. May also be involved in the development or function of the female gametophyte. The chain is Cation/H(+) antiporter 23, chloroplastic (CHX23) from Arabidopsis thaliana (Mouse-ear cress).